A 476-amino-acid polypeptide reads, in one-letter code: FAD-dependent monooxygenase prhF (476 aa).

Positions 41, 55, and 114 each coordinate FAD. Tyrosine 222 is an active-site residue. The FAD site is built by aspartate 314 and alanine 327. Residue asparagine 343 is glycosylated (N-linked (GlcNAc...) asparagine). A helical transmembrane segment spans residues 447 to 467 (LGSTPIQMLTLLLPCLFYFMY). Asparagine 471 is a glycosylation site (N-linked (GlcNAc...) asparagine).

This sequence belongs to the paxM FAD-dependent monooxygenase family. Requires FAD as cofactor.

The protein resides in the membrane. It functions in the pathway secondary metabolite biosynthesis; terpenoid biosynthesis. In terms of biological role, FAD-dependent monooxygenase; part of the gene cluster that mediates the biosynthesis of paraherquonin, a meroterpenoid with a unique, highly congested hexacyclic molecular architecture. The first step of the pathway is the synthesis of 3,5-dimethylorsellinic acid (DMOA) by the polyketide synthase prhL. Synthesis of DMOA is followed by farnesylation by the prenyltransferase prhE, methylesterification by the methyl-transferase prhM, epoxidation of the prenyl chain by the flavin-dependent monooxygenase prhF, and cyclization of the farnesyl moiety by the terpene cyclase prhH, to yield the tetracyclic intermediate, protoaustinoid A. The short chain dehydrogenase prhI then oxidizes the C-3 alcohol group of the terpene cyclase product to transform protoaustinoid A into protoaustinoid B. The FAD-binding monooxygenase prhJ catalyzes the oxidation of protoaustinoid B into preaustinoid A which is further oxidized into preaustinoid A1 by FAD-binding monooxygenase phrK. Finally, prhA leads to berkeleydione via the berkeleyone B intermediate. PrhA is a multifunctional dioxygenase that first desaturates at C5-C6 to form berkeleyone B, followed by rearrangement of the A/B-ring to form the cycloheptadiene moiety in berkeleydione. Berkeleydione serves as the key intermediate for the biosynthesis of paraherquonin as well as many other meroterpenoids. The cytochrome P450 monooxygenases prhB, prhD, and prhN, as well as the isomerase prhC, are probably involved in the late stage of paraherquonin biosynthesis, after the production of berkeleydione. Especially prhC might be a multifunctional enzyme that catalyzes the D-ring expansion via intramolecular methoxy rearrangement, as well as the hydrolysis of the expanded D-ring. The polypeptide is FAD-dependent monooxygenase prhF (Penicillium brasilianum).